Reading from the N-terminus, the 127-residue chain is Large ribosomal subunit protein uL18 (127 aa).

This sequence belongs to the universal ribosomal protein uL18 family. In terms of assembly, part of the 50S ribosomal subunit; part of the 5S rRNA/L5/L18/L25 subcomplex. Contacts the 5S and 23S rRNAs.

In terms of biological role, this is one of the proteins that bind and probably mediate the attachment of the 5S RNA into the large ribosomal subunit, where it forms part of the central protuberance. This Streptomyces coelicolor (strain ATCC BAA-471 / A3(2) / M145) protein is Large ribosomal subunit protein uL18.